The following is a 108-amino-acid chain: Acid stress chaperone HdeB (108 aa).

The first 29 residues, 1-29 (MNISSLRKAFIFMGAVAALSLVNAQSALA), serve as a signal peptide directing secretion. The residue at position 93 (Lys-93) is an N6-acetyllysine.

Belongs to the HdeB family.

The protein resides in the periplasm. In terms of biological role, required for optimal acid stress protection, which is important for survival of enteric bacteria in the acidic environment of the host stomach. Exhibits a chaperone-like activity at acidic pH by preventing the aggregation of many different periplasmic proteins. The protein is Acid stress chaperone HdeB of Escherichia coli O6:H1 (strain CFT073 / ATCC 700928 / UPEC).